The sequence spans 504 residues: Lysine--tRNA ligase (504 aa).

The Mg(2+) site is built by Glu414 and Glu421.

It belongs to the class-II aminoacyl-tRNA synthetase family. In terms of assembly, homodimer. Requires Mg(2+) as cofactor.

The protein localises to the cytoplasm. It catalyses the reaction tRNA(Lys) + L-lysine + ATP = L-lysyl-tRNA(Lys) + AMP + diphosphate. The polypeptide is Lysine--tRNA ligase (Photorhabdus laumondii subsp. laumondii (strain DSM 15139 / CIP 105565 / TT01) (Photorhabdus luminescens subsp. laumondii)).